Consider the following 443-residue polypeptide: Phosphoglucosamine mutase (443 aa).

Ser-101 functions as the Phosphoserine intermediate in the catalytic mechanism. Ser-101, Asp-239, Asp-241, and Asp-243 together coordinate Mg(2+). Ser-101 is subject to Phosphoserine.

This sequence belongs to the phosphohexose mutase family. The cofactor is Mg(2+). Activated by phosphorylation.

It carries out the reaction alpha-D-glucosamine 1-phosphate = D-glucosamine 6-phosphate. Catalyzes the conversion of glucosamine-6-phosphate to glucosamine-1-phosphate. The protein is Phosphoglucosamine mutase of Francisella philomiragia subsp. philomiragia (strain ATCC 25017 / CCUG 19701 / FSC 153 / O#319-036).